A 724-amino-acid polypeptide reads, in one-letter code: Pesticidal crystal protein Cry11Ba (724 aa).

Belongs to the delta endotoxin family.

Functionally, promotes colloidosmotic lysis by binding to the midgut epithelial cells of mosquitos. Active on Aedes aegypti, Culex pipiens and Anopheles stephensi larvae. The sequence is that of Pesticidal crystal protein Cry11Ba (cry11Ba) from Bacillus thuringiensis subsp. jegathesan.